An 865-amino-acid chain; its full sequence is Alanine--tRNA ligase (865 aa).

Residues H554, H558, C656, and H660 each contribute to the Zn(2+) site.

Belongs to the class-II aminoacyl-tRNA synthetase family. Zn(2+) serves as cofactor.

It localises to the cytoplasm. It catalyses the reaction tRNA(Ala) + L-alanine + ATP = L-alanyl-tRNA(Ala) + AMP + diphosphate. Functionally, catalyzes the attachment of alanine to tRNA(Ala) in a two-step reaction: alanine is first activated by ATP to form Ala-AMP and then transferred to the acceptor end of tRNA(Ala). Also edits incorrectly charged Ser-tRNA(Ala) and Gly-tRNA(Ala) via its editing domain. This is Alanine--tRNA ligase from Francisella tularensis subsp. mediasiatica (strain FSC147).